Reading from the N-terminus, the 259-residue chain is DNA-directed RNA polymerase 30 kDa polypeptide (259 aa).

A TFIIS-type zinc finger spans residues Tyr-155 to Lys-195. The Zn(2+) site is built by Cys-159, Cys-162, Cys-187, and Cys-190. Residues Glu-220–Glu-259 are disordered. Residues Asn-226 to Ala-236 show a composition bias toward pro residues.

It belongs to the poxviridae DNA-directed RNA polymerase 30 kDa subunit family. The DNA-dependent RNA polymerase (vRNAP) consists of eight subunits encoded by early viral genes and termed according to their apparent molecular masses Rpo147, Rpo132, Rpo35, Rpo30, Rpo22, Rpo19, Rpo18, and Rpo7. The same holoenzyme, with the addition of the transcription-specificity factor RAP94, is used for early gene expression.

It is found in the virion. Its subcellular location is the host cytoplasm. It carries out the reaction RNA(n) + a ribonucleoside 5'-triphosphate = RNA(n+1) + diphosphate. Its function is as follows. Part of the DNA-dependent RNA polymerase which catalyzes the transcription of viral DNA into RNA using the four ribonucleoside triphosphates as substrates. Responsible for the transcription of early, intermediate and late genes. DNA-dependent RNA polymerase associates with the early transcription factor (ETF), itself composed of OPG118 and OPG134, thereby allowing the early genes transcription. Late transcription, and probably also intermediate transcription, require newly synthesized RNA polymerase. In Homo sapiens (Human), this protein is DNA-directed RNA polymerase 30 kDa polypeptide (OPG066).